The primary structure comprises 270 residues: MNKNSPELHPIGVFDSGVGGLTVVRALMERLPFENILYFGDTARVPYGVKSVETINAYARQITEFLLRQEVKLLIIACNTMAAVARQSVESLSPVPVLDVIDAGARRAVAETRTHSVGVIGTPTTINSNAYARAICRLAPETRIFSQACALLVPLVEEGWLDHPVTRLTAQEYLRPVLAEHIDTLVLGCTHYPLLKALLQDVAGPDIHLVDSAEAMADATAELLQVQHLTNPERIPPEYRFYVTDVPLRFQQIGERFLGRSLPGVERVQL.

Substrate contacts are provided by residues 15–16 and 47–48; these read DS and YG. The active-site Proton donor/acceptor is the cysteine 78. 79-80 is a binding site for substrate; sequence NT. Residue cysteine 189 is the Proton donor/acceptor of the active site. 190 to 191 contacts substrate; it reads TH.

This sequence belongs to the aspartate/glutamate racemases family.

It catalyses the reaction L-glutamate = D-glutamate. It functions in the pathway cell wall biogenesis; peptidoglycan biosynthesis. Provides the (R)-glutamate required for cell wall biosynthesis. The sequence is that of Glutamate racemase from Syntrophus aciditrophicus (strain SB).